A 415-amino-acid polypeptide reads, in one-letter code: Peptide chain release factor subunit 1 (415 aa).

This sequence belongs to the eukaryotic release factor 1 family. Heterodimer of two subunits, one of which binds GTP.

The protein resides in the cytoplasm. Its function is as follows. Directs the termination of nascent peptide synthesis (translation) in response to the termination codons UAA, UAG and UGA. The sequence is that of Peptide chain release factor subunit 1 from Thermococcus sibiricus (strain DSM 12597 / MM 739).